A 212-amino-acid polypeptide reads, in one-letter code: Large ribosomal subunit protein uL1 (212 aa).

The protein belongs to the universal ribosomal protein uL1 family. In terms of assembly, part of the 50S ribosomal subunit.

Functionally, binds directly to 23S rRNA. Probably involved in E site tRNA release. In terms of biological role, protein L1 is also a translational repressor protein, it controls the translation of its operon by binding to its mRNA. In Methanothermobacter thermautotrophicus (strain ATCC 29096 / DSM 1053 / JCM 10044 / NBRC 100330 / Delta H) (Methanobacterium thermoautotrophicum), this protein is Large ribosomal subunit protein uL1.